Consider the following 55-residue polypeptide: uncharacterized protein (55 aa).

This is an uncharacterized protein from Avena byzantina (Oat).